The sequence spans 303 residues: Propanal dehydrogenase (CoA-propanoylating) (303 aa).

NAD(+) is bound at residue 12–15 (SGNI). The active-site Acyl-thioester intermediate is the Cys127. Residues 158 to 166 (SAGPGTRAN) and Asn277 each bind NAD(+).

This sequence belongs to the acetaldehyde dehydrogenase family. In terms of assembly, monomer. Forms a heterotetramer composed of two aldolase (HsaF) and two dehydrogenase (HsaG) subunits.

The catalysed reaction is propanal + NAD(+) + CoA = propanoyl-CoA + NADH + H(+). It carries out the reaction acetaldehyde + NAD(+) + CoA = acetyl-CoA + NADH + H(+). In terms of biological role, involved in cholesterol degradation. Catalyzes the conversion of propanal to propanoyl-CoA, using NAD(+) and coenzyme A. This is Propanal dehydrogenase (CoA-propanoylating) from Mycobacterium bovis (strain ATCC BAA-935 / AF2122/97).